The following is a 126-amino-acid chain: C-type natriuretic peptide (126 aa).

The signal sequence occupies residues 1–23 (MHLSQLIACALLLALLSLRPSEA). The disordered stretch occupies residues 19–71 (RPSEAKPGTPPKVPRTPPGEELAEPQAAGGNQKKGDKTPGGGGANLKGDRSRL). A propeptide spanning residues 24–73 (KPGTPPKVPRTPPGEELAEPQAAGGNQKKGDKTPGGGGANLKGDRSRLLR) is cleaved from the precursor. A compositionally biased stretch (pro residues) spans 26 to 35 (GTPPKVPRTP). Cysteines 110 and 126 form a disulfide.

Belongs to the natriuretic peptide family. Post-translationally, degraded by IDE (in vitro). In terms of tissue distribution, expressed exclusively in brain.

It is found in the secreted. In terms of biological role, hormone which plays a role in endochondral ossification through regulation of cartilaginous growth plate chondrocytes proliferation and differentiation. May also be vasoactive and natriuretic. Acts by specifically binding and stimulating NPR2 to produce cGMP. Binds the clearance receptor NPR3. The sequence is that of C-type natriuretic peptide (Nppc) from Rattus norvegicus (Rat).